Reading from the N-terminus, the 488-residue chain is MFILRVHSVDSERPISVEEEESGFTYASKRAQPPLKLIQPSLKLTDRKGLIHLYRKSSHSSLPNPSSRSTTLFIVAVPNYLSSLDFIRFCDSRISQVSDILFIRNDGMEDRYSVLITFSDQSEADGFYNNLNGKKFAPSEAEVCHILYVMSVEHTEFDEVAAEAPTGFTELPTCPICLERLDPDTSGIVSTLCDHSFQCSCTSKWTYLSCQVCRLCQQQDEILNCSICGKTENVWACLVCGFVGCGRYKEGHSIRHWKETHHCYSLDLRTQQIWDYVGDSYVHRLNHSKIDGKSVEMSTSCLSHQGDCGLCECSEDTGISGAIFNSKVDSIVIEYNDLLASQLKGQRQYYESLIVEARSKQESSIAEAVEQIVVNTMQELQNKIEKCEEEKSGITEVNTKLIKEQDTWRKKAKEIEEREAALLGSKDEMITDLQEQIRDITVFIEAKKTLKKMSSDTDGIREGTVLPVPISPEPVSSVRRQKKSNRRK.

An RING-type; degenerate zinc finger spans residues 174–214; sequence CPICLERLDPDTSGIVSTLCDHSFQCSCTSKWTYLSCQVCR. The UBP-type; degenerate zinc-finger motif lies at 208–301; it reads LSCQVCRLCQ…GKSVEMSTSC (94 aa). Residues cysteine 225, cysteine 228, cysteine 237, cysteine 240, cysteine 245, histidine 252, histidine 256, and histidine 262 each contribute to the Zn(2+) site. Positions 370–418 form a coiled coil; it reads EQIVVNTMQELQNKIEKCEEEKSGITEVNTKLIKEQDTWRKKAKEIEER. Positions 453 to 488 are disordered; sequence MSSDTDGIREGTVLPVPISPEPVSSVRRQKKSNRRK. Low complexity predominate over residues 465-478; sequence VLPVPISPEPVSSV. Residues 479 to 488 show a composition bias toward basic residues; that stretch reads RRQKKSNRRK.

As to quaternary structure, component of the heteromeric E3 ligase complex made of BRIZ1 and BRIZ2. Forms heterooligomers with BRIZ2 via coiled-coil domains.

The enzyme catalyses S-ubiquitinyl-[E2 ubiquitin-conjugating enzyme]-L-cysteine + [acceptor protein]-L-lysine = [E2 ubiquitin-conjugating enzyme]-L-cysteine + N(6)-ubiquitinyl-[acceptor protein]-L-lysine.. It participates in protein modification; protein ubiquitination. Its function is as follows. RING-type ubiquitin E3 ligase required for seed germination and post-germination growth. The polypeptide is BRAP2 RING ZnF UBP domain-containing protein 1 (Arabidopsis thaliana (Mouse-ear cress)).